A 35-amino-acid chain; its full sequence is Photosystem II reaction center protein T (35 aa).

The helical transmembrane segment at 3–23 (AFAYTLLMTLVVATLFFAVAF) threads the bilayer.

It belongs to the PsbT family. As to quaternary structure, PSII is composed of 1 copy each of membrane proteins PsbA, PsbB, PsbC, PsbD, PsbE, PsbF, PsbH, PsbI, PsbJ, PsbK, PsbL, PsbM, PsbT, PsbX, PsbY, Psb30/Ycf12, peripheral proteins PsbO, CyanoQ (PsbQ), PsbU, PsbV and a large number of cofactors. It forms dimeric complexes.

It is found in the cellular thylakoid membrane. Found at the monomer-monomer interface of the photosystem II (PS II) dimer, plays a role in assembly and dimerization of PSII. PSII is a light-driven water plastoquinone oxidoreductase, using light energy to abstract electrons from H(2)O, generating a proton gradient subsequently used for ATP formation. In Prochlorococcus marinus (strain MIT 9303), this protein is Photosystem II reaction center protein T.